A 598-amino-acid chain; its full sequence is UvrABC system protein C (598 aa).

The region spanning 14–91 (DSPGCYLHKD…IQKNMPKYNI (78 aa)) is the GIY-YIG domain. The UVR domain maps to 196–231 (DKIIEDLRSKMLAASKEMAFERAAEYRDLISGIATM).

The protein belongs to the UvrC family. As to quaternary structure, interacts with UvrB in an incision complex.

Its subcellular location is the cytoplasm. Its function is as follows. The UvrABC repair system catalyzes the recognition and processing of DNA lesions. UvrC both incises the 5' and 3' sides of the lesion. The N-terminal half is responsible for the 3' incision and the C-terminal half is responsible for the 5' incision. In Streptococcus pyogenes serotype M1, this protein is UvrABC system protein C.